The chain runs to 179 residues: Adenine phosphoribosyltransferase (179 aa).

It belongs to the purine/pyrimidine phosphoribosyltransferase family. In terms of assembly, homodimer.

Its subcellular location is the cytoplasm. The enzyme catalyses AMP + diphosphate = 5-phospho-alpha-D-ribose 1-diphosphate + adenine. Its pathway is purine metabolism; AMP biosynthesis via salvage pathway; AMP from adenine: step 1/1. Its function is as follows. Catalyzes a salvage reaction resulting in the formation of AMP, that is energically less costly than de novo synthesis. The protein is Adenine phosphoribosyltransferase of Haemophilus ducreyi (strain 35000HP / ATCC 700724).